Consider the following 168-residue polypeptide: HTH-type transcriptional regulator IscR (168 aa).

In terms of domain architecture, HTH rrf2-type spans 2-131; it reads KLTSKGRYAV…NNITLGELMK (130 aa). A DNA-binding region (H-T-H motif) is located at residues 28-51; it reads LADISERQGISLSYLEQLFSKLRK. Cys92, Cys98, and Cys104 together coordinate [2Fe-2S] cluster.

[2Fe-2S] cluster serves as cofactor.

Functionally, regulates the transcription of several operons and genes involved in the biogenesis of Fe-S clusters and Fe-S-containing proteins. This Vibrio campbellii (strain ATCC BAA-1116) protein is HTH-type transcriptional regulator IscR.